We begin with the raw amino-acid sequence, 124 residues long: Large ribosomal subunit protein uL22 (124 aa).

It belongs to the universal ribosomal protein uL22 family. In terms of assembly, part of the 50S ribosomal subunit.

In terms of biological role, this protein binds specifically to 23S rRNA; its binding is stimulated by other ribosomal proteins, e.g. L4, L17, and L20. It is important during the early stages of 50S assembly. It makes multiple contacts with different domains of the 23S rRNA in the assembled 50S subunit and ribosome. Its function is as follows. The globular domain of the protein is located near the polypeptide exit tunnel on the outside of the subunit, while an extended beta-hairpin is found that lines the wall of the exit tunnel in the center of the 70S ribosome. The sequence is that of Large ribosomal subunit protein uL22 from Treponema pallidum (strain Nichols).